Reading from the N-terminus, the 416-residue chain is UDP-N-acetylmuramoylalanine--D-glutamate ligase (416 aa).

108–114 (GTTGKTT) is an ATP binding site.

It belongs to the MurCDEF family.

The protein resides in the cytoplasm. The catalysed reaction is UDP-N-acetyl-alpha-D-muramoyl-L-alanine + D-glutamate + ATP = UDP-N-acetyl-alpha-D-muramoyl-L-alanyl-D-glutamate + ADP + phosphate + H(+). The protein operates within cell wall biogenesis; peptidoglycan biosynthesis. Its function is as follows. Cell wall formation. Catalyzes the addition of glutamate to the nucleotide precursor UDP-N-acetylmuramoyl-L-alanine (UMA). This is UDP-N-acetylmuramoylalanine--D-glutamate ligase from Chlamydia trachomatis serovar L2b (strain UCH-1/proctitis).